A 57-amino-acid polypeptide reads, in one-letter code: UPF0391 membrane protein BRADO5617 (57 aa).

The next 2 membrane-spanning stretches (helical) occupy residues 1–21 (MLGWVVTFLVIALIAGILGFG) and 30–50 (IAKIIFFIAIVLFLVSAVVGL).

It belongs to the UPF0391 family.

It localises to the cell membrane. This Bradyrhizobium sp. (strain ORS 278) protein is UPF0391 membrane protein BRADO5617.